The sequence spans 40 residues: Photosystem II reaction center protein J (40 aa).

The helical transmembrane segment at 8 to 28 (IPLWLIGTVTGTLVIGLIGIF) threads the bilayer.

The protein belongs to the PsbJ family. PSII is composed of 1 copy each of membrane proteins PsbA, PsbB, PsbC, PsbD, PsbE, PsbF, PsbH, PsbI, PsbJ, PsbK, PsbL, PsbM, PsbT, PsbX, PsbY, PsbZ, Psb30/Ycf12, at least 3 peripheral proteins of the oxygen-evolving complex and a large number of cofactors. It forms dimeric complexes.

The protein resides in the plastid. The protein localises to the chloroplast thylakoid membrane. In terms of biological role, one of the components of the core complex of photosystem II (PSII). PSII is a light-driven water:plastoquinone oxidoreductase that uses light energy to abstract electrons from H(2)O, generating O(2) and a proton gradient subsequently used for ATP formation. It consists of a core antenna complex that captures photons, and an electron transfer chain that converts photonic excitation into a charge separation. The sequence is that of Photosystem II reaction center protein J from Cycas taitungensis (Prince sago).